Consider the following 154-residue polypeptide: Protein X (154 aa).

The mitochondrial targeting sequence stretch occupies residues 68–117 (PCALRFTSARRMETTVNAHGNLPKVLHKRTLGLSAMSTTDLEAYFKDCVF).

It belongs to the orthohepadnavirus protein X family. May form homodimer. May interact with host CEBPA, CFLAR, CREB1, DDB1, E4F1, HBXIP, HSPD1/HSP60, NFKBIA, POLR2E and SMAD4. Interacts with host SMC5-SMC6 complex and induces its degradation. Interacts with host TRPC4AP; leading to prevent ubiquitination of TRPC4AP. Interacts with host PLSCR1; this interaction promotes ubiquitination and degradation of HBx and impairs HBx-mediated cell proliferation. A fraction may be phosphorylated in insect cells and HepG2 cells, a human hepatoblastoma cell line. Phosphorylated in vitro by host protein kinase C or mitogen-activated protein kinase. N-acetylated in insect cells.

It localises to the host cytoplasm. It is found in the host nucleus. Its subcellular location is the host mitochondrion. Multifunctional protein that plays a role in silencing host antiviral defenses and promoting viral transcription. Does not seem to be essential for HBV infection. May be directly involved in development of cirrhosis and liver cancer (hepatocellular carcinoma). Most of cytosolic activities involve modulation of cytosolic calcium. The effect on apoptosis is controversial depending on the cell types in which the studies have been conducted. May induce apoptosis by localizing in mitochondria and causing loss of mitochondrial membrane potential. May also modulate apoptosis by binding host CFLAR, a key regulator of the death-inducing signaling complex (DISC). Promotes viral transcription by using the host E3 ubiquitin ligase DDB1 to target the SMC5-SMC6 complex to proteasomal degradation. This host complex would otherwise bind to viral episomal DNA, and prevents its transcription. Moderately stimulates transcription of many different viral and cellular transcription elements. Promoters and enhancers stimulated by HBx contain DNA binding sites for NF-kappa-B, AP-1, AP-2, c-EBP, ATF/CREB, or the calcium-activated factor NF-AT. In Hepatitis B virus genotype B/C subtype adw (isolate Okinawa/pODW282/1998) (HBV-B), this protein is Protein X.